The chain runs to 294 residues: Extracellular metalloprotease TRV_07111 (294 aa).

Positions 1-19 (MRFSVVFAAIAALSSVVTA) are cleaved as a signal peptide. N-linked (GlcNAc...) asparagine glycosylation is found at N49, N54, and N74. Residue H185 participates in Zn(2+) binding. Residue E186 is part of the active site. Residue H189 participates in Zn(2+) binding. Residues C224 and C250 are joined by a disulfide bond.

It belongs to the peptidase M43B family.

It localises to the secreted. Secreted metalloproteinase that allows assimilation of proteinaceous substrates. Plays a pivotal role as a pathogenicity determinant during infections and contributes to the ability of the pathogen to persist within the mammalian host. The sequence is that of Extracellular metalloprotease TRV_07111 from Trichophyton verrucosum (strain HKI 0517).